The following is a 362-amino-acid chain: 3-dehydroquinate synthase (362 aa).

Residues 70–75, 104–108, 128–129, K141, K150, and 168–171 each bind NAD(+); these read EGEQYK, GVIGD, TT, and TLTT. Residues E183, H246, and H263 each coordinate Zn(2+).

This sequence belongs to the sugar phosphate cyclases superfamily. Dehydroquinate synthase family. It depends on Co(2+) as a cofactor. The cofactor is Zn(2+). NAD(+) is required as a cofactor.

Its subcellular location is the cytoplasm. The enzyme catalyses 7-phospho-2-dehydro-3-deoxy-D-arabino-heptonate = 3-dehydroquinate + phosphate. Its pathway is metabolic intermediate biosynthesis; chorismate biosynthesis; chorismate from D-erythrose 4-phosphate and phosphoenolpyruvate: step 2/7. Its function is as follows. Catalyzes the conversion of 3-deoxy-D-arabino-heptulosonate 7-phosphate (DAHP) to dehydroquinate (DHQ). In Histophilus somni (strain 2336) (Haemophilus somnus), this protein is 3-dehydroquinate synthase.